The primary structure comprises 393 residues: Interleukin-1 receptor type 2 (393 aa).

The N-terminal stretch at 1 to 13 (MFRLYVLVMGVSA) is a signal peptide. The Extracellular portion of the chain corresponds to 14-347 (FTLQPAAHTG…RTTVKEPPPT (334 aa)). Cystine bridges form between C28/C116, C50/C108, and C152/C207. Ig-like C2-type domains follow at residues 29–120 (PVRG…DKVS), 134–221 (PFIS…YNIT), and 237–342 (PVII…TTVK). N66, N72, and N112 each carry an N-linked (GlcNAc...) asparagine glycan. N-linked (GlcNAc...) asparagine glycosylation is found at N219 and N277. C258 and C326 are joined by a disulfide. Residues 348–368 (FSWGIVLAPLALAFLVLGGIW) form a helical membrane-spanning segment. The Cytoplasmic portion of the chain corresponds to 369–393 (MHRRCKHRTGKADGLTVLRPHHQDF).

It belongs to the interleukin-1 receptor family. In terms of assembly, forms a non-signaling receptor complex consisting of IL1R2 and IL1RAP. Post-translationally, a soluble form (sIL1R2) can also be produced by proteolytic cleavage at the cell surface (shedding) involving a metalloproteinase.

The protein localises to the secreted. It is found in the cell membrane. Functionally, non-signaling receptor for IL1A, IL1B and IL1RN. Reduces IL1B activities. Serves as a decoy receptor by competitive binding to IL1B and preventing its binding to IL1R1. Also modulates cellular response through non-signaling association with IL1RAP after binding to IL1B. IL1R2 (membrane and secreted forms) preferentially binds IL1B and poorly IL1A and IL1RN. The secreted IL1R2 recruits secreted IL1RAP with high affinity; this complex formation may be the dominant mechanism for neutralization of IL1B by secreted/soluble receptors. This chain is Interleukin-1 receptor type 2 (IL1R2), found in Chlorocebus aethiops (Green monkey).